The chain runs to 668 residues: UvrABC system protein C (668 aa).

The GIY-YIG domain maps to 14 to 91; the sequence is DSPGCYLHKD…IQRYKPKYNI (78 aa). Residues 196 to 231 enclose the UVR domain; the sequence is KKIVNELEAKMMVSSDNMEFEQAAEYRDVIKAIGTL.

This sequence belongs to the UvrC family. In terms of assembly, interacts with UvrB in an incision complex.

Its subcellular location is the cytoplasm. The UvrABC repair system catalyzes the recognition and processing of DNA lesions. UvrC both incises the 5' and 3' sides of the lesion. The N-terminal half is responsible for the 3' incision and the C-terminal half is responsible for the 5' incision. In Lactococcus lactis subsp. lactis (strain IL1403) (Streptococcus lactis), this protein is UvrABC system protein C.